A 130-amino-acid polypeptide reads, in one-letter code: D-ribose pyranase (130 aa).

The Proton donor role is filled by histidine 20. Residues aspartate 28, histidine 97, and 119–121 (YAN) contribute to the substrate site.

This sequence belongs to the RbsD / FucU family. RbsD subfamily. As to quaternary structure, homodecamer.

The protein resides in the cytoplasm. The catalysed reaction is beta-D-ribopyranose = beta-D-ribofuranose. It participates in carbohydrate metabolism; D-ribose degradation; D-ribose 5-phosphate from beta-D-ribopyranose: step 1/2. Its function is as follows. Catalyzes the interconversion of beta-pyran and beta-furan forms of D-ribose. This is D-ribose pyranase from Bacillus pumilus (strain SAFR-032).